The chain runs to 705 residues: CAP-Gly domain-containing linker protein 4 (705 aa).

ANK repeat units lie at residues 65-101 (TSVSELFAILRQWVPQVQQNIDIIGNEILKRGCNVND), 149-180 (TNMNALHYAAYFDVPELIRVILKTSKPKDVDA), and 186-215 (NFGTALHIAAYNLCAGAVKCLLEQGANPAF). One can recognise a CAP-Gly 1 domain in the interval 303–345 (GTTEFASGQWAGIELDEPEGKNNGSVGKVQYFKCAPKYGIFAP). Disordered stretches follow at residues 391-410 (MTSKKDSASESTLSLPPGEE) and 431-479 (TSSL…ANNS). Residues 441-452 (PKKQNAISSNKK) are compositionally biased toward polar residues. Positions 455-479 (SKSPSLSSRASAGLNSSATSTANNS) are enriched in low complexity. Residues 505–547 (GTTNFAPGYWYGIELEKPHGKNDGSVGGVQYFSCSPRYGIFAP) enclose the CAP-Gly 2 domain. Phosphoserine occurs at positions 557 and 609. A CAP-Gly 3 domain is found at 644–686 (GPTDFASGIWLGLELRSAKGKNDGSVGDKRYFTCKPNHGVLVR).

This Homo sapiens (Human) protein is CAP-Gly domain-containing linker protein 4 (CLIP4).